A 164-amino-acid polypeptide reads, in one-letter code: MASTATNKITLTSSDGVEVTIERQVAERSILIKNMLEDLGDSGEPIPIPNVNESVLKKVIEWCEHHKGDPPSTGDDDVDSRRKTTDIDEWDQKFMQVDQEMLFEIILAANYLDIKALLDVGCKTVANMIKGKSPEEIRKTFNIQNDFTPEEEDQIRRENEWAEE.

The interval I106 to E164 is interaction with the F-box domain of F-box proteins.

The protein belongs to the SKP1 family. Component of the SCF (SKP1-CUL1-F-box protein) E3 ubiquitin ligase complexes.

It participates in protein modification; protein ubiquitination. Essential component of the SCF (SKP1-CUL1-F-box protein) E3 ubiquitin ligase complexes, which mediate the ubiquitination and subsequent proteasomal degradation of target proteins. Controls sulfur metabolite repression, probably by mediating the inactivation or degradation of the metR transcription factor. The chain is E3 ubiquitin ligase complex SCF subunit sconC (sconC) from Arthroderma benhamiae (strain ATCC MYA-4681 / CBS 112371) (Trichophyton mentagrophytes).